Reading from the N-terminus, the 275-residue chain is Large ribosomal subunit protein uL2c (275 aa).

Residues 225–259 are disordered; that stretch reads KNPVDHPHGGGEGRAPIGRSTPVTPWGKPALGRRT.

This sequence belongs to the universal ribosomal protein uL2 family. As to quaternary structure, part of the 50S ribosomal subunit.

The protein resides in the plastid. Its subcellular location is the cyanelle. The polypeptide is Large ribosomal subunit protein uL2c (rpl2) (Cyanophora paradoxa).